Reading from the N-terminus, the 284-residue chain is Tropomyosin (284 aa).

Positions 1–284 (MDAIKKKMQA…DMTFTELIGN (284 aa)) form a coiled coil.

It belongs to the tropomyosin family. As to quaternary structure, homodimer.

Functionally, tropomyosin, in association with the troponin complex, plays a central role in the calcium dependent regulation of muscle contraction. The sequence is that of Tropomyosin from Blattella germanica (German cockroach).